The following is a 94-amino-acid chain: Protein RnfH (94 aa).

The protein belongs to the UPF0125 (RnfH) family.

This Serratia proteamaculans (strain 568) protein is Protein RnfH.